We begin with the raw amino-acid sequence, 142 residues long: Large ribosomal subunit protein bL17 (142 aa).

It belongs to the bacterial ribosomal protein bL17 family. As to quaternary structure, part of the 50S ribosomal subunit. Contacts protein L32.

The chain is Large ribosomal subunit protein bL17 from Chlamydia felis (strain Fe/C-56) (Chlamydophila felis).